A 335-amino-acid polypeptide reads, in one-letter code: L-threo-3-deoxy-hexylosonate aldolase (335 aa).

A substrate-binding site is contributed by 50-51; it reads SN. K175 (schiff-base intermediate with substrate) is an active-site residue.

Belongs to the DapA family.

The catalysed reaction is 2-dehydro-3-deoxy-L-galactonate = L-glyceraldehyde + pyruvate. The protein operates within carbohydrate acid metabolism. Mediates the conversion of 2-dehydro-3-deoxy-L-galactonate to pyruvate and L-glyceraldehyde in D-galacturonate catabolic process. This Aspergillus niger protein is L-threo-3-deoxy-hexylosonate aldolase (gaaC).